Consider the following 307-residue polypeptide: Serine/threonine-protein phosphatase 4 catalytic subunit B (307 aa).

The Mn(2+) site is built by D54, H56, D82, and N114. H115 serves as the catalytic Proton donor. Residues H164 and H238 each coordinate Mn(2+). L307 bears the Leucine methyl ester mark.

The protein belongs to the PPP phosphatase family. PP-4 (PP-X) subfamily. In terms of assembly, serine/threonine-protein phosphatase 4 (PP4) occurs in different assemblies of the catalytic and one or more regulatory subunits. It depends on Mn(2+) as a cofactor.

It localises to the cytoplasm. It is found in the cytoskeleton. The protein localises to the microtubule organizing center. Its subcellular location is the centrosome. The enzyme catalyses O-phospho-L-seryl-[protein] + H2O = L-seryl-[protein] + phosphate. It catalyses the reaction O-phospho-L-threonyl-[protein] + H2O = L-threonyl-[protein] + phosphate. Functionally, protein phosphatase that regulates many processes such as microtubule organization at centrosomes. The polypeptide is Serine/threonine-protein phosphatase 4 catalytic subunit B (ppp4cb) (Danio rerio (Zebrafish)).